The following is a 404-amino-acid chain: Succinyl-diaminopimelate desuccinylase (404 aa).

A Zn(2+)-binding site is contributed by His-80. Asp-82 is a catalytic residue. Asp-113 provides a ligand contact to Zn(2+). Glu-147 (proton acceptor) is an active-site residue. Zn(2+) contacts are provided by Glu-148, Glu-176, and His-373.

This sequence belongs to the peptidase M20A family. DapE subfamily. Homodimer. It depends on Zn(2+) as a cofactor. Requires Co(2+) as cofactor.

It catalyses the reaction N-succinyl-(2S,6S)-2,6-diaminopimelate + H2O = (2S,6S)-2,6-diaminopimelate + succinate. The protein operates within amino-acid biosynthesis; L-lysine biosynthesis via DAP pathway; LL-2,6-diaminopimelate from (S)-tetrahydrodipicolinate (succinylase route): step 3/3. Catalyzes the hydrolysis of N-succinyl-L,L-diaminopimelic acid (SDAP), forming succinate and LL-2,6-diaminopimelate (DAP), an intermediate involved in the bacterial biosynthesis of lysine and meso-diaminopimelic acid, an essential component of bacterial cell walls. In Allorhizobium ampelinum (strain ATCC BAA-846 / DSM 112012 / S4) (Agrobacterium vitis (strain S4)), this protein is Succinyl-diaminopimelate desuccinylase.